A 194-amino-acid polypeptide reads, in one-letter code: Probable GTP-binding protein EngB (194 aa).

Residues 23–194 enclose the EngB-type G domain; it reads LNGEFVFVGR…YELIEIFGGV (172 aa). Residues 31 to 38, 57 to 61, 75 to 78, 143 to 146, and 173 to 175 contribute to the GTP site; these read GRSNVGKS, GKTAS, DLPG, TKMD, and YSA. Mg(2+)-binding residues include S38 and T59.

The protein belongs to the TRAFAC class TrmE-Era-EngA-EngB-Septin-like GTPase superfamily. EngB GTPase family. The cofactor is Mg(2+).

Functionally, necessary for normal cell division and for the maintenance of normal septation. The chain is Probable GTP-binding protein EngB from Thermosipho africanus (strain TCF52B).